The sequence spans 350 residues: [LysW]-L-2-aminoadipate/[LysW]-L-glutamate phosphate reductase (350 aa).

An NADP(+)-binding site is contributed by 10 to 13 (SGYT). Residue cysteine 150 is part of the active site. Asparagine 317 serves as a coordination point for NADP(+).

The protein belongs to the NAGSA dehydrogenase family. Type 1 subfamily. LysY sub-subfamily.

It localises to the cytoplasm. It carries out the reaction [amino-group carrier protein]-C-terminal-N-(1-carboxy-5-oxopentan-1-yl)-L-glutamine + phosphate + NADP(+) = [amino-group carrier protein]-C-terminal-N-(1-carboxy-5-phosphooxy-5-oxopentan-1-yl)-L-glutamine + NADPH + H(+). It catalyses the reaction [amino-group carrier protein]-C-terminal-gamma-(L-glutamyl-5-semialdehyde)-L-glutamate + phosphate + NADP(+) = [amino-group carrier protein]-C-terminal-gamma-(5-phospho-L-glutamyl)-L-glutamate + NADPH + H(+). Its pathway is amino-acid biosynthesis; L-lysine biosynthesis via AAA pathway; L-lysine from L-alpha-aminoadipate (Thermus route): step 3/5. The protein operates within amino-acid biosynthesis; L-arginine biosynthesis. In terms of biological role, involved in both the arginine and lysine biosynthetic pathways. This Sulfolobus acidocaldarius (strain ATCC 33909 / DSM 639 / JCM 8929 / NBRC 15157 / NCIMB 11770) protein is [LysW]-L-2-aminoadipate/[LysW]-L-glutamate phosphate reductase.